Reading from the N-terminus, the 229-residue chain is Large ribosomal subunit protein uL1 (229 aa).

This sequence belongs to the universal ribosomal protein uL1 family. Part of the 50S ribosomal subunit.

Binds directly to 23S rRNA. The L1 stalk is quite mobile in the ribosome, and is involved in E site tRNA release. Functionally, protein L1 is also a translational repressor protein, it controls the translation of the L11 operon by binding to its mRNA. The sequence is that of Large ribosomal subunit protein uL1 from Rhodopseudomonas palustris (strain HaA2).